Here is a 510-residue protein sequence, read N- to C-terminus: Cytochrome P450 94B1 (510 aa).

Residues 3-23 (MLNAIILILFPIIGFVLIFSF) traverse the membrane as a helical segment. Cys-450 is a binding site for heme.

Belongs to the cytochrome P450 family. The cofactor is heme.

It is found in the membrane. It catalyses the reaction a jasmonyl-L-amino acid + reduced [NADPH--hemoprotein reductase] + O2 = a 12-hydroxyjasmonyl-L-alpha-amino acid + oxidized [NADPH--hemoprotein reductase] + H2O + H(+). Hydroxylase involved in the oxidation of the plant hormone jasmonoyl-L-isoleucine (JA-Ile), a bioactive phytohormone of the jasmonate-mediated signaling pathway. Converts JA-Ile to 12-hydroxy-JA-Ile. This Arabidopsis thaliana (Mouse-ear cress) protein is Cytochrome P450 94B1.